The primary structure comprises 428 residues: Kynureninase (428 aa).

Pyridoxal 5'-phosphate-binding positions include Thr-104, Thr-105, 132–135 (FPSD), Asp-213, His-216, and Tyr-238. Lys-239 is subject to N6-(pyridoxal phosphate)lysine. Residues Trp-267 and Thr-295 each contribute to the pyridoxal 5'-phosphate site.

The protein belongs to the kynureninase family. Homodimer. It depends on pyridoxal 5'-phosphate as a cofactor.

It carries out the reaction L-kynurenine + H2O = anthranilate + L-alanine + H(+). The catalysed reaction is 3-hydroxy-L-kynurenine + H2O = 3-hydroxyanthranilate + L-alanine + H(+). Its pathway is amino-acid degradation; L-kynurenine degradation; L-alanine and anthranilate from L-kynurenine: step 1/1. It functions in the pathway cofactor biosynthesis; NAD(+) biosynthesis; quinolinate from L-kynurenine: step 2/3. In terms of biological role, catalyzes the cleavage of L-kynurenine (L-Kyn) and L-3-hydroxykynurenine (L-3OHKyn) into anthranilic acid (AA) and 3-hydroxyanthranilic acid (3-OHAA), respectively. The protein is Kynureninase of Bacillus cereus (strain ATCC 14579 / DSM 31 / CCUG 7414 / JCM 2152 / NBRC 15305 / NCIMB 9373 / NCTC 2599 / NRRL B-3711).